We begin with the raw amino-acid sequence, 203 residues long: Ras-related protein Rab-8B (203 aa).

GTP contacts are provided by residues 22-29, 70-74, and 128-131; these read GDSGVGKS, DTAGQ, and NKCD. Residues C202 and C203 are each lipidated (S-geranylgeranyl cysteine).

Belongs to the small GTPase superfamily. Rab family.

It is found in the cell membrane. Protein transport. Probably involved in vesicular traffic. This Dictyostelium discoideum (Social amoeba) protein is Ras-related protein Rab-8B (rab8B).